A 408-amino-acid polypeptide reads, in one-letter code: Peptidase T (408 aa).

His78 contributes to the Zn(2+) binding site. Asp80 is an active-site residue. Asp140 is a binding site for Zn(2+). Residue Glu173 is the Proton acceptor of the active site. Zn(2+) contacts are provided by Glu174, Asp196, and His379.

It belongs to the peptidase M20B family. Zn(2+) is required as a cofactor.

It is found in the cytoplasm. The catalysed reaction is Release of the N-terminal residue from a tripeptide.. Functionally, cleaves the N-terminal amino acid of tripeptides. The sequence is that of Peptidase T from Escherichia coli (strain K12 / MC4100 / BW2952).